Consider the following 128-residue polypeptide: MHPHDLNLLCCLHFSKPSLPNDLKTLLFRACETSCKLNRRLLDNKPFQGTSKCAKRRRAKRYNRCFDCGAYLYDDHVCKRFTSRSNSDCLSVIHQGPAKLYAEGAYRANSDAEQLIMNDMLLIKSLKL.

A C4-type zinc finger spans residues 65 to 94 (CFDCGAYLYDDHVCKRFTSRSNSDCLSVIH).

May act as a regulatory factor during viral transcription. The sequence is that of 14.7 kDa protein from Shallot virus X (ShVX).